Here is a 120-residue protein sequence, read N- to C-terminus: Spermidine export protein MdtJ (120 aa).

A run of 4 helical transmembrane segments spans residues 1 to 21 (MFYW…TLSM), 31 to 51 (TGFI…SFAV), 54 to 74 (IALG…ITLF), and 81 to 101 (EALS…IALI).

The protein belongs to the drug/metabolite transporter (DMT) superfamily. Small multidrug resistance (SMR) (TC 2.A.7.1) family. MdtJ subfamily. In terms of assembly, forms a complex with MdtI.

The protein localises to the cell inner membrane. Functionally, catalyzes the excretion of spermidine. The sequence is that of Spermidine export protein MdtJ from Citrobacter koseri (strain ATCC BAA-895 / CDC 4225-83 / SGSC4696).